The chain runs to 89 residues: Teretoxin Tan22.12 (89 aa).

The first 22 residues, 1–22 (MKVLFTLAMIVVTLCLGQRMRR), serve as a signal peptide directing secretion.

The protein belongs to the teretoxin C (TC) superfamily. In terms of processing, contains 4 disulfide bonds. Expressed by the venom duct.

The protein resides in the secreted. In Terebra anilis (Auger snail), this protein is Teretoxin Tan22.12.